The sequence spans 347 residues: Gentisate 1,2 dioxygenase 1 (347 aa).

The 68-residue stretch at 96–163 (LQLILPGEVA…DSDKPMIWMD (68 aa)) folds into the Cupin type-2 domain.

It belongs to the gentisate 1,2-dioxygenase family. In terms of assembly, homotetramer. It depends on Fe(2+) as a cofactor.

It catalyses the reaction 2,5-dihydroxybenzoate + O2 = 3-maleylpyruvate + H(+). Its activity is regulated as follows. Completely inhibited by the presence of 5 mM Cu(2+). Partially inhibited with 5 mM Mn(2+), Zn(2+) or EDTA. Its function is as follows. Involved in the degradation of gentisate. Catalyzes the conversion of gentisate (2,5-dihydroxybenzoate) to maleylpyruvate. Exhibits broad substrate specificities towards alkyl and halogenated gentisates. The protein is Gentisate 1,2 dioxygenase 1 of Aquipseudomonas alcaligenes (Pseudomonas alcaligenes).